A 101-amino-acid polypeptide reads, in one-letter code: Small ribosomal subunit protein uS14 (101 aa).

Positions 1 to 10 (MAKKSSIEKN) are enriched in basic and acidic residues. The segment at 1-23 (MAKKSSIEKNNRRKKMTKNAAPK) is disordered. A compositionally biased stretch (basic residues) spans 11 to 23 (NRRKKMTKNAAPK).

This sequence belongs to the universal ribosomal protein uS14 family. In terms of assembly, part of the 30S ribosomal subunit. Contacts proteins S3 and S10.

In terms of biological role, binds 16S rRNA, required for the assembly of 30S particles and may also be responsible for determining the conformation of the 16S rRNA at the A site. The protein is Small ribosomal subunit protein uS14 of Rhodopseudomonas palustris (strain HaA2).